The chain runs to 47 residues: Large ribosomal subunit protein uL14c (47 aa).

Belongs to the universal ribosomal protein uL14 family. Part of the 50S ribosomal subunit.

The protein resides in the plastid. It is found in the chloroplast. Its function is as follows. Binds to 23S rRNA. The polypeptide is Large ribosomal subunit protein uL14c (rpl14) (Vigna unguiculata (Cowpea)).